We begin with the raw amino-acid sequence, 682 residues long: ATP-dependent DNA helicase RecG (682 aa).

The segment at 46–139 (ELRDLEEVKH…LKNGPHQEDK (94 aa)) is wedge domain. The region spanning 271–432 (DMSSPYRMNR…VFGEMDVSVI (162 aa)) is the Helicase ATP-binding domain. 284 to 291 (GDVGSGKT) contributes to the ATP binding site. Residues 385–388 (DEQH) carry the DEAH box motif. Positions 451–611 (MLDRILAFVE…GFELSEKDLE (161 aa)) constitute a Helicase C-terminal domain.

The protein belongs to the helicase family. RecG subfamily. As to quaternary structure, monomer. Interacts with SSB (sbbA), via the latter's 6 C-terminal residues. Colocalizes with DNA pol III subunit gamma/tau (dnaX).

It is found in the cytoplasm. The protein resides in the nucleoid. It catalyses the reaction Couples ATP hydrolysis with the unwinding of duplex DNA by translocating in the 3'-5' direction.. It carries out the reaction ATP + H2O = ADP + phosphate + H(+). Its activity is regulated as follows. Replication fork regression on Holliday junctions (HJ) is inhibited by DisA; DisA inhibits the ATPase activity of RecG. Critical role in recombination and DNA repair. Helps process Holliday junction intermediates to mature products by catalyzing branch migration. Has a DNA unwinding activity characteristic of a DNA helicase with 3'-5' polarity. Unwinds branched duplex DNA (Y-DNA), Holliday junction (HJ) DNA and partially replicated forks as well as catalyzing fork reversal/regression. Does not seem to unwind R-loops. Inhibits the diadenylate cyclase (DAC) activity of DisA in the presence but not absence of HJ DNA, possibly by relocating DisA from the junction. This Bacillus subtilis (strain 168) protein is ATP-dependent DNA helicase RecG.